The following is a 264-amino-acid chain: Proteasome assembly chaperone 2 (264 aa).

Threonine 137 bears the Phosphothreonine mark.

This sequence belongs to the PSMG2 family. In terms of assembly, forms a heterodimer with PSMG1. The PSMG1-PSMG2 heterodimer interacts directly with the PSMA5 and PSMA7 proteasome alpha subunits. Degraded by the proteasome upon completion of 20S proteasome maturation. Widely expressed with highest levels in lung, brain and colon. Moderately expressed in muscle, stomach, spleen and heart. Weakly expressed in small intestine, pancreas and liver. Highly expressed in hepatocellular carcinomas with low levels in surrounding liver tissue.

It is found in the nucleus. Its function is as follows. Chaperone protein which promotes assembly of the 20S proteasome as part of a heterodimer with PSMG1. The PSMG1-PSMG2 heterodimer binds to the PSMA5 and PSMA7 proteasome subunits, promotes assembly of the proteasome alpha subunits into the heteroheptameric alpha ring and prevents alpha ring dimerization. The sequence is that of Proteasome assembly chaperone 2 from Homo sapiens (Human).